The primary structure comprises 1284 residues: ABC multidrug transporter atrC (1284 aa).

Basic and acidic residues predominate over residues 1 to 11 (MKSTAESKETP). Residues 1 to 24 (MKSTAESKETPSQDESTTSVPCTE) form a disordered region. 6 consecutive transmembrane segments (helical) span residues 55-75 (AVAI…NLIF), 99-119 (AAEL…LSYT), 178-198 (IGLL…RLWC), 203-223 (TLIC…VAAV), 282-302 (LLGL…GLAF), and 320-340 (IFTV…LAPY). The 292-residue stretch at 55-346 (AVAILAACAS…LAPYSIEFSR (292 aa)) folds into the ABC transmembrane type-1 1 domain. The ABC transporter 1 domain maps to 381–626 (VELENVTFSY…DGVYAGLVKI (246 aa)). Asn385 and Asn401 each carry an N-linked (GlcNAc...) asparagine glycan. 416-423 (GQSGSGKS) provides a ligand contact to ATP. N-linked (GlcNAc...) asparagine glycans are attached at residues Asn488 and Asn632. The next 2 helical transmembrane spans lie at 705–725 (LVVL…AILM) and 745–765 (FYAS…LAVG). The region spanning 705–992 (LVVLLGCLGG…LFQWSTSITK (288 aa)) is the ABC transmembrane type-1 2 domain. N-linked (GlcNAc...) asparagine glycosylation occurs at Asn800. The next 4 helical transmembrane spans lie at 824 to 844 (IALV…AIAF), 846 to 866 (WKLG…AGMV), 931 to 951 (MICF…GFWY), and 955 to 975 (LVSL…SVFF). An N-linked (GlcNAc...) asparagine glycan is attached at Asn995. The ABC transporter 2 domain occupies 1027 to 1280 (IAMDNVRFSY…GGLYRRMCEA (254 aa)). 1062–1069 (GSSGCGKS) is an ATP binding site. N-linked (GlcNAc...) asparagine glycosylation occurs at Asn1122.

The protein belongs to the ABC transporter superfamily. ABCB family. Multidrug resistance exporter (TC 3.A.1.201) subfamily.

It is found in the cell membrane. In terms of biological role, pleiotropic ABC efflux transporter involved in the protection of the cells against a wide range of toxic compounds. In Emericella nidulans (Aspergillus nidulans), this protein is ABC multidrug transporter atrC.